The following is an 80-amino-acid chain: Homeobox protein 7 (80 aa).

The segment at residues S8 to S67 is a DNA-binding region (homeobox). The tract at residues R60 to K80 is disordered. Low complexity predominate over residues N70–K80.

It is found in the nucleus. Functionally, putative transcription factor. In Dictyostelium discoideum (Social amoeba), this protein is Homeobox protein 7 (hbx7).